Here is a 275-residue protein sequence, read N- to C-terminus: Phosphite transport system permease protein PtxC (275 aa).

Transmembrane regions (helical) follow at residues 30 to 50 (LGQVAIVFGVVLLACWYVGLL), 88 to 108 (LAMSIAGTAIAVVFSLVVAFV), 136 to 156 (LIMGIIFVAAVGFGALPGVLA), 221 to 241 (ASTVMGMVGAGGIGFELMGSL), and 249 to 269 (VAAILLVILAMVTLVDAFSGV). Residues 84–267 (LIDTLAMSIA…AMVTLVDAFS (184 aa)) form the ABC transmembrane type-1 domain.

This sequence belongs to the binding-protein-dependent transport system permease family.

The protein resides in the cell inner membrane. Functionally, probably forms part of a binding-protein-dependent phosphite transporter. Probably responsible for the translocation of the substrate across the membrane. This Stutzerimonas stutzeri (Pseudomonas stutzeri) protein is Phosphite transport system permease protein PtxC (ptxC).